We begin with the raw amino-acid sequence, 152 residues long: Protein-export protein SecB (152 aa).

This sequence belongs to the SecB family. As to quaternary structure, homotetramer, a dimer of dimers. One homotetramer interacts with 1 SecA dimer.

The protein localises to the cytoplasm. In terms of biological role, one of the proteins required for the normal export of preproteins out of the cell cytoplasm. It is a molecular chaperone that binds to a subset of precursor proteins, maintaining them in a translocation-competent state. It also specifically binds to its receptor SecA. In Rickettsia africae (strain ESF-5), this protein is Protein-export protein SecB.